Here is a 376-residue protein sequence, read N- to C-terminus: Succinyl-diaminopimelate desuccinylase (376 aa).

H67 lines the Zn(2+) pocket. The active site involves D69. D100 is a Zn(2+) binding site. The Proton acceptor role is filled by E134. Residues E135, E163, and H349 each contribute to the Zn(2+) site.

The protein belongs to the peptidase M20A family. DapE subfamily. As to quaternary structure, homodimer. Zn(2+) is required as a cofactor. It depends on Co(2+) as a cofactor.

The catalysed reaction is N-succinyl-(2S,6S)-2,6-diaminopimelate + H2O = (2S,6S)-2,6-diaminopimelate + succinate. Its pathway is amino-acid biosynthesis; L-lysine biosynthesis via DAP pathway; LL-2,6-diaminopimelate from (S)-tetrahydrodipicolinate (succinylase route): step 3/3. Functionally, catalyzes the hydrolysis of N-succinyl-L,L-diaminopimelic acid (SDAP), forming succinate and LL-2,6-diaminopimelate (DAP), an intermediate involved in the bacterial biosynthesis of lysine and meso-diaminopimelic acid, an essential component of bacterial cell walls. The protein is Succinyl-diaminopimelate desuccinylase of Pseudoalteromonas translucida (strain TAC 125).